Reading from the N-terminus, the 377-residue chain is UPF0754 membrane protein lwe2241 (377 aa).

The next 2 helical transmembrane spans lie at 1–21 (MSVLFTILLMAVIGGFIGAMT) and 357–377 (YLGGILGGFIGVIQGILAIWI).

Belongs to the UPF0754 family.

Its subcellular location is the cell membrane. The polypeptide is UPF0754 membrane protein lwe2241 (Listeria welshimeri serovar 6b (strain ATCC 35897 / DSM 20650 / CCUG 15529 / CIP 8149 / NCTC 11857 / SLCC 5334 / V8)).